A 218-amino-acid chain; its full sequence is Monomethylamine corrinoid protein 1 (218 aa).

The 91-residue stretch at 1-91 (MANQEIFDKL…ELEKTKVEGE (91 aa)) folds into the B12-binding N-terminal domain. The region spanning 94–218 (TGLAITFVAE…AAKVALNIMK (125 aa)) is the B12-binding domain. Residue His-107 participates in methylcob(III)alamin binding.

Belongs to the methylamine corrinoid protein family. Can form a complex with MtmB.

The protein operates within one-carbon metabolism; methanogenesis from methylamine. Acts as a methyl group carrier between MtmB and MtbA. The chain is Monomethylamine corrinoid protein 1 (mtmC1) from Methanosarcina acetivorans (strain ATCC 35395 / DSM 2834 / JCM 12185 / C2A).